The chain runs to 554 residues: Dihydroxy-acid dehydratase (554 aa).

D78 contributes to the Mg(2+) binding site. C119 lines the [2Fe-2S] cluster pocket. 2 residues coordinate Mg(2+): D120 and K121. Position 121 is an N6-carboxylysine (K121). C191 contacts [2Fe-2S] cluster. Residue E442 participates in Mg(2+) binding. S468 functions as the Proton acceptor in the catalytic mechanism.

The protein belongs to the IlvD/Edd family. In terms of assembly, homodimer. The cofactor is [2Fe-2S] cluster. Mg(2+) serves as cofactor.

The enzyme catalyses (2R)-2,3-dihydroxy-3-methylbutanoate = 3-methyl-2-oxobutanoate + H2O. It carries out the reaction (2R,3R)-2,3-dihydroxy-3-methylpentanoate = (S)-3-methyl-2-oxopentanoate + H2O. It participates in amino-acid biosynthesis; L-isoleucine biosynthesis; L-isoleucine from 2-oxobutanoate: step 3/4. The protein operates within amino-acid biosynthesis; L-valine biosynthesis; L-valine from pyruvate: step 3/4. In terms of biological role, functions in the biosynthesis of branched-chain amino acids. Catalyzes the dehydration of (2R,3R)-2,3-dihydroxy-3-methylpentanoate (2,3-dihydroxy-3-methylvalerate) into 2-oxo-3-methylpentanoate (2-oxo-3-methylvalerate) and of (2R)-2,3-dihydroxy-3-methylbutanoate (2,3-dihydroxyisovalerate) into 2-oxo-3-methylbutanoate (2-oxoisovalerate), the penultimate precursor to L-isoleucine and L-valine, respectively. This chain is Dihydroxy-acid dehydratase, found in Hydrogenobaculum sp. (strain Y04AAS1).